Consider the following 913-residue polypeptide: Striatin-interacting protein homolog (913 aa).

Composition is skewed to low complexity over residues 177–188 (QQQQQQQQNENE), 195–204 (TNFTTTTTTT), and 791–811 (NNNNSNNNNNNNNNNSTNNDN). Disordered regions lie at residues 177-204 (QQQQQQQQNENEGSGEGGTNFTTTTTTT) and 791-814 (NNNNSNNNNNNNNNNSTNNDNGLT).

Belongs to the STRIP family.

This is Striatin-interacting protein homolog (fam40) from Dictyostelium discoideum (Social amoeba).